Here is an 82-residue protein sequence, read N- to C-terminus: Small ribosomal subunit protein uS17 (82 aa).

This sequence belongs to the universal ribosomal protein uS17 family. Part of the 30S ribosomal subunit.

One of the primary rRNA binding proteins, it binds specifically to the 5'-end of 16S ribosomal RNA. The sequence is that of Small ribosomal subunit protein uS17 from Shewanella amazonensis (strain ATCC BAA-1098 / SB2B).